Consider the following 881-residue polypeptide: DNA replication helicase (881 aa).

Residues 1–32 (MESADILPGSRGTVDRRCEGSEEKITPPRPVE) form a disordered region. Residues 13 to 32 (TVDRRCEGSEEKITPPRPVE) are compositionally biased toward basic and acidic residues. 105 to 112 (GNAGSGKS) lines the ATP pocket.

The protein belongs to the herpesviridae helicase family. As to quaternary structure, associates with the primase and the primase-associated factor to form the helicase-primase complex.

Its subcellular location is the host nucleus. Functionally, component of the helicase/primase complex. Unwinds the DNA at the replication forks and generates single-stranded DNA for both leading and lagging strand synthesis. The primase synthesizes short RNA primers on the lagging strand that the polymerase elongates using dNTPs. Possesses helicase-like motifs and therefore may act as the helicase subunit of the complex. The polypeptide is DNA replication helicase (Equus caballus (Horse)).